A 207-amino-acid polypeptide reads, in one-letter code: Partner of Y14 and mago (207 aa).

Disordered regions lie at residues 1–28 (MSTY…KARR) and 52–133 (QRQA…NSIS). Positions 64-91 (LLAAESKKEREKQERTRAKKQEKESGRQ) form a coiled coil. A compositionally biased stretch (basic and acidic residues) spans 68–90 (ESKKEREKQERTRAKKQEKESGR). A compositionally biased stretch (polar residues) spans 123–133 (PSGSRDINSIS). The stretch at 152 to 184 (AKQLKKLRKKIREIEQIESRIQAGEQKKLDKDQ) forms a coiled coil.

This sequence belongs to the pym family. Interacts (via N-terminus) with mago and tsu/RBM8A; the interaction is direct. As to expression, expression detected in the ovary. In the oocyte expressed in the germarium, nurse cell and follicle cell.

Its subcellular location is the cytoplasm. It localises to the nucleus. Its function is as follows. Regulator of the exon junction complex (EJC), a multiprotein complex that associates immediately upstream of the exon-exon junction on mRNAs and serves as a positional landmark for the intron exon structure of genes and directs post-transcriptional processes in the cytoplasm such as mRNA export, nonsense-mediated mRNA decay (NMD) or translation. Acts as an EJC disassembly factor by disrupting mature EJC from spliced mRNAs. Required for normal localization of osk mRNA to the posterior pole of the developing oocyte. Does not interact with the small ribosomal unit or components of the translation initiation complex. May not function in cap-dependent translation regulation. This Drosophila melanogaster (Fruit fly) protein is Partner of Y14 and mago.